We begin with the raw amino-acid sequence, 357 residues long: Isopentenyl-diphosphate delta-isomerase (357 aa).

12–13 provides a ligand contact to substrate; that stretch reads RK. FMN-binding positions include Ser70, 71–73, Ser101, and Asn130; that span reads SMT. 101–103 provides a ligand contact to substrate; it reads SMR. Residue Gln165 participates in substrate binding. Glu166 serves as a coordination point for Mg(2+). FMN is bound by residues Lys197, 289–291, and 310–311; these read GIR and AQ.

Belongs to the IPP isomerase type 2 family. Homooctamer. Dimer of tetramers. FMN is required as a cofactor. It depends on NADPH as a cofactor. Requires Mg(2+) as cofactor.

It is found in the cytoplasm. It carries out the reaction isopentenyl diphosphate = dimethylallyl diphosphate. Functionally, involved in the biosynthesis of isoprenoids. Catalyzes the 1,3-allylic rearrangement of the homoallylic substrate isopentenyl (IPP) to its allylic isomer, dimethylallyl diphosphate (DMAPP). The polypeptide is Isopentenyl-diphosphate delta-isomerase (Chlorobaculum parvum (strain DSM 263 / NCIMB 8327) (Chlorobium vibrioforme subsp. thiosulfatophilum)).